The chain runs to 64 residues: Conotoxin Leo-T1 (64 aa).

An N-terminal signal peptide occupies residues 1–22 (MRCLPVFIILLLLIPSAPSVDA). Residues 23 to 48 (QPKTEDDVPLASLHDNAKLTLQGLWD) constitute a propeptide that is removed on maturation.

Belongs to the conotoxin T superfamily. Post-translationally, contains 2 disulfide bonds that can be either 'C1-C3, C2-C4' or 'C1-C4, C2-C3', since these disulfide connectivities have been observed for conotoxins with cysteine framework V (for examples, see AC P0DQQ7 and AC P81755). In terms of tissue distribution, expressed by the venom duct.

The protein resides in the secreted. The chain is Conotoxin Leo-T1 from Conus leopardus (Leopard cone).